Consider the following 135-residue polypeptide: uncharacterized protein (135 aa).

Positions 8–123 constitute a HotDog ACOT-type domain; sequence PQGTIVLKTL…IFIYVAIDET (116 aa).

Belongs to the acyl coenzyme A hydrolase family.

This is an uncharacterized protein from Buchnera aphidicola subsp. Schizaphis graminum (strain Sg).